A 313-amino-acid polypeptide reads, in one-letter code: Peroxidase 57 (313 aa).

A signal peptide spans 1–22 (MMKGAKFSSLLVLFFIFPIAFA). Cystine bridges form between Cys33–Cys109, Cys66–Cys71, Cys115–Cys309, and Cys192–Cys224. Residue His64 is the Proton acceptor of the active site. 5 residues coordinate Ca(2+): Asp65, Val68, Gly70, Asp72, and Ser74. Pro155 lines the substrate pocket. His185 lines the heme b pocket. Ca(2+) is bound at residue Thr186. Ca(2+)-binding residues include Asp233, Ser236, and Asp241.

The protein belongs to the peroxidase family. Classical plant (class III) peroxidase subfamily. Heme b is required as a cofactor. The cofactor is Ca(2+). In terms of tissue distribution, mainly expressed in roots.

It localises to the secreted. It carries out the reaction 2 a phenolic donor + H2O2 = 2 a phenolic radical donor + 2 H2O. Its function is as follows. Removal of H(2)O(2), oxidation of toxic reductants, biosynthesis and degradation of lignin, suberization, auxin catabolism, response to environmental stresses such as wounding, pathogen attack and oxidative stress. These functions might be dependent on each isozyme/isoform in each plant tissue. The chain is Peroxidase 57 (PER57) from Arabidopsis thaliana (Mouse-ear cress).